We begin with the raw amino-acid sequence, 313 residues long: Malate dehydrogenase (313 aa).

NAD(+)-binding positions include 8–13 (GAGNVG) and aspartate 33. Positions 83 and 89 each coordinate substrate. NAD(+) contacts are provided by residues asparagine 96 and 119-121 (ISN). 2 residues coordinate substrate: asparagine 121 and arginine 152. Histidine 176 functions as the Proton acceptor in the catalytic mechanism.

Belongs to the LDH/MDH superfamily. MDH type 3 family.

The catalysed reaction is (S)-malate + NAD(+) = oxaloacetate + NADH + H(+). Functionally, catalyzes the reversible oxidation of malate to oxaloacetate. The protein is Malate dehydrogenase of Parabacteroides distasonis (strain ATCC 8503 / DSM 20701 / CIP 104284 / JCM 5825 / NCTC 11152).